The chain runs to 819 residues: MAPNATTKKRAAAKDDDFVLTLSDDENDVLENGVEEDTLSSSKKRKRDAAEAPKGKNKKQKQLKKSKKGESAAGAVSDDQSGEEDEAEAMDAGEDDGALDSEFEFDVGGNANTGVIEGFDGWEARNGAGPADAPKNGDKKAVDIDDIISRRKAKKEAELKKKQQKEKKRREEEGEEESEDEDADSDGGMSVDFQDDELLAADGFGMGADGADESGDDVENDSNDSDDADEKGSEDEESDDDAAASDNDSVATPVHHPDDEAASDEESEAESEVDAEEAEKRKAFFAPEEKSTAASTSNRSFQDFNLSRPILRGLASVNFTTPTPIQQKTIPVALLGKDIVGSAVTGSGKTAAFVVPILERLLFRPRKVPTSRVAILMPTRELAVQCYNVATKLATHTDITFCQLVGGFSLREQENILKKRPDVIIATPGRFIDHMRNSPSFTVDTLEILVLDEADRMLEDGFADELNEILTTIPQSRQTMLFSATMTDSVDKLIRVGLNRPVRLMVDSKKNTSMNLTQEFVRLRPGREDKRLGYLLYLCNEIYTGRVIVFFRQKREAHRVRIVFGLLGLKAAELHGSMSQEQRIKSVENFREGKVAFLLATDLASRGLDIKGVETVINYEAPQSHEIYLHRVGRTARAGRSGRACTIAAEPDRKIVKSAVKAGKAQGAKIVSRVVDPAVADEWAAKAKGLEDEIEEVLQEEKLEKQMAQAEMQVTKGENMIKHEAEIMSRPKRTWFETERDKRAARKLGATELNGPSKKDKVKLSNKDKKRLDDARQRHEGNIGWKKGKADREAPKQGKNKGSKNKSDKKNNIKMKGKK.

Residues 1–299 (MAPNATTKKR…KSTAASTSNR (299 aa)) form a disordered region. Acidic residues predominate over residues 23 to 38 (SDDENDVLENGVEEDT). Basic residues predominate over residues 55 to 67 (GKNKKQKQLKKSK). The span at 80–105 (QSGEEDEAEAMDAGEDDGALDSEFEF) shows a compositional bias: acidic residues. The span at 135 to 161 (KNGDKKAVDIDDIISRRKAKKEAELKK) shows a compositional bias: basic and acidic residues. Acidic residues-rich tracts occupy residues 173-185 (EGEE…DADS), 210-243 (GADE…DDAA), and 260-277 (EAAS…DAEE). Residues 278-291 (AEKRKAFFAPEEKS) show a composition bias toward basic and acidic residues. The Q motif motif lies at 299–327 (RSFQDFNLSRPILRGLASVNFTTPTPIQQ). The region spanning 330–504 (IPVALLGKDI…RVGLNRPVRL (175 aa)) is the Helicase ATP-binding domain. 343–350 (AVTGSGKT) contacts ATP. A DEAD box motif is present at residues 452–455 (DEAD). Residues 531–678 (RLGYLLYLCN…KIVSRVVDPA (148 aa)) form the Helicase C-terminal domain. 2 stretches are compositionally biased toward basic and acidic residues: residues 732 to 742 (KRTWFETERDK) and 757 to 781 (SKKD…RHEG). Residues 732–819 (KRTWFETERD…KNNIKMKGKK (88 aa)) are disordered.

The protein belongs to the DEAD box helicase family. DDX27/DRS1 subfamily. As to quaternary structure, associates with pre-ribosomal particles.

The protein resides in the nucleus. It is found in the nucleolus. The enzyme catalyses ATP + H2O = ADP + phosphate + H(+). Its function is as follows. ATP-binding RNA helicase involved in ribosome assembly. The polypeptide is ATP-dependent RNA helicase drs1 (drs1) (Neosartorya fischeri (strain ATCC 1020 / DSM 3700 / CBS 544.65 / FGSC A1164 / JCM 1740 / NRRL 181 / WB 181) (Aspergillus fischerianus)).